Here is a 42-residue protein sequence, read N- to C-terminus: Pelovaterin (42 aa).

Intrachain disulfides connect Cys8/Cys38, Cys16/Cys32, and Cys24/Cys39.

The protein resides in the secreted. It localises to the extracellular space. The protein localises to the extracellular matrix. Induces the nucleation and stabilization of vaterite, one of the crystalline polymorphs of calcium carbonate. Exhibits strong antimicrobial activity against Pseudomonas aeruginosa and Proteus vulgaris. The protein is Pelovaterin of Pelodiscus sinensis (Chinese softshell turtle).